Reading from the N-terminus, the 436-residue chain is GTPase Obg (436 aa).

Residues 2-160 (SMFLDTAKIQ…RELLLELKVL (159 aa)) form the Obg domain. Residues 161–338 (ADVGLVGFPS…LLDATAELLD (178 aa)) enclose the OBG-type G domain. GTP contacts are provided by residues 167–174 (GFPSVGKS), 192–196 (FTTIV), 214–217 (DLPG), 284–287 (NKMD), and 319–321 (SSL). Positions 174 and 194 each coordinate Mg(2+). Positions 358 to 436 (GFDEEAPAFE…IGKFEFEFVD (79 aa)) constitute an OCT domain.

It belongs to the TRAFAC class OBG-HflX-like GTPase superfamily. OBG GTPase family. Monomer. Mg(2+) serves as cofactor.

The protein resides in the cytoplasm. In terms of biological role, an essential GTPase which binds GTP, GDP and possibly (p)ppGpp with moderate affinity, with high nucleotide exchange rates and a fairly low GTP hydrolysis rate. Plays a role in control of the cell cycle, stress response, ribosome biogenesis and in those bacteria that undergo differentiation, in morphogenesis control. In Streptococcus gordonii (strain Challis / ATCC 35105 / BCRC 15272 / CH1 / DL1 / V288), this protein is GTPase Obg.